Here is an 86-residue protein sequence, read N- to C-terminus: Large ribosomal subunit protein bL31B (86 aa).

The protein belongs to the bacterial ribosomal protein bL31 family. Type B subfamily. As to quaternary structure, part of the 50S ribosomal subunit.

This Vibrio vulnificus (strain CMCP6) protein is Large ribosomal subunit protein bL31B.